The sequence spans 386 residues: Small ribosomal subunit protein mS31 (386 aa).

Belongs to the mitochondrion-specific ribosomal protein mS31 family. Component of the mitochondrial ribosome small subunit (28S) which comprises a 12S rRNA and about 30 distinct proteins.

The protein localises to the mitochondrion. The polypeptide is Small ribosomal subunit protein mS31 (MRPS31) (Bos taurus (Bovine)).